We begin with the raw amino-acid sequence, 391 residues long: Pectate lyase B (391 aa).

The N-terminal stretch at 1 to 30 is a signal peptide; it reads MKKTVRSLCSTALALTLGFTLLSGPASVQA. 3 residues coordinate Ca(2+): D181, D203, and D207. The active site involves R305.

Belongs to the polysaccharide lyase 1 family. Ca(2+) is required as a cofactor.

It localises to the secreted. It carries out the reaction Eliminative cleavage of (1-&gt;4)-alpha-D-galacturonan to give oligosaccharides with 4-deoxy-alpha-D-galact-4-enuronosyl groups at their non-reducing ends.. The catalysed reaction is Eliminative cleavage of (1-&gt;4)-alpha-D-galacturonan methyl ester to give oligosaccharides with 4-deoxy-6-O-methyl-alpha-D-galact-4-enuronosyl groups at their non-reducing ends.. The protein operates within glycan metabolism; pectin degradation. Its function is as follows. Catalyzes the depolymerization of both polygalacturonate and pectins of various methyl esterification degree, with an endo mode of action. Shows the highest activity on 20 to 34% methylated pectin but retains 67%, 51%, 25%, and 1% of its maximum activity on polygalacturonate and 8.5%, 55 to 70%, and 90% methylated pectin, respectively. This is Pectate lyase B from Paenibacillus amylolyticus.